The primary structure comprises 127 residues: Small ribosomal subunit protein bS6 (127 aa).

A disordered region spans residues 96–127 (VTTPSPMMKEEKSRSLTPAAGDEGKPAEAAEA). Basic and acidic residues predominate over residues 117–127 (DEGKPAEAAEA).

Belongs to the bacterial ribosomal protein bS6 family.

Binds together with bS18 to 16S ribosomal RNA. The polypeptide is Small ribosomal subunit protein bS6 (Azoarcus sp. (strain BH72)).